A 426-amino-acid polypeptide reads, in one-letter code: Tol-Pal system protein TolB (426 aa).

Positions 1–25 are cleaved as a signal peptide; sequence MSITPSLSRRTVMSLLAAGLSPAFA.

This sequence belongs to the TolB family. In terms of assembly, the Tol-Pal system is composed of five core proteins: the inner membrane proteins TolA, TolQ and TolR, the periplasmic protein TolB and the outer membrane protein Pal. They form a network linking the inner and outer membranes and the peptidoglycan layer.

It localises to the periplasm. Functionally, part of the Tol-Pal system, which plays a role in outer membrane invagination during cell division and is important for maintaining outer membrane integrity. This Polaromonas sp. (strain JS666 / ATCC BAA-500) protein is Tol-Pal system protein TolB.